The following is a 528-amino-acid chain: U3 small nucleolar RNA-associated protein 15 homolog (528 aa).

Alanine 2 carries the N-acetylalanine modification. 7 WD repeats span residues 36 to 75 (KEFG…PVKT), 78 to 117 (RFKD…PLRQ), 120 to 159 (GHTK…EILT), 162 to 202 (EHSD…NVLC), 204 to 242 (EHGQ…QLLV), 246 to 285 (NHHK…VVHS), and 287 to 326 (DYAA…KKES). Residue lysine 249 forms a Glycyl lysine isopeptide (Lys-Gly) (interchain with G-Cter in SUMO2) linkage. Positions 508–528 (AELPEEKTESPRQPSDTDKNS) are disordered. A compositionally biased stretch (basic and acidic residues) spans 511–528 (PEEKTESPRQPSDTDKNS).

In terms of assembly, part of the small subunit (SSU) processome, composed of more than 70 proteins and the RNA chaperone small nucleolar RNA (snoRNA) U3. May be a component of the proposed t-UTP subcomplex of the ribosomal small subunit (SSU) processome containing at least UTP4, WDR43, HEATR1, UTP15, WDR75. Interacts directly with UTP4 and WDR43.

The protein resides in the nucleus. It is found in the nucleolus. Ribosome biogenesis factor. Involved in nucleolar processing of pre-18S ribosomal RNA. Required for optimal pre-ribosomal RNA transcription by RNA polymerase I. Part of the small subunit (SSU) processome, first precursor of the small eukaryotic ribosomal subunit. During the assembly of the SSU processome in the nucleolus, many ribosome biogenesis factors, an RNA chaperone and ribosomal proteins associate with the nascent pre-rRNA and work in concert to generate RNA folding, modifications, rearrangements and cleavage as well as targeted degradation of pre-ribosomal RNA by the RNA exosome. This Rattus norvegicus (Rat) protein is U3 small nucleolar RNA-associated protein 15 homolog.